The following is a 339-amino-acid chain: UPF0324 membrane protein SpyM3_0740 (339 aa).

A run of 9 helical transmembrane segments spans residues 7–24 (KLPGLLLCLLLALPAWYL), 28–50 (FPIIGAPVFAILLGMLLALFYHH), 57–79 (GISFTSKYILQTAVVLLGFGLNL), 84–106 (AVGMQSLPIIISTIATALLVAYG), 118–140 (ATLVGIGSSICGGSAIAATAPVI), 150–172 (AISVIFLFNMLAALLFPSLGQLL), 256–275 (FILFFLLASLITTLMTSLGV), 290–307 (FIVMAMAAIGLNTNLVKL), and 314–336 (AILLGSICWVAITLVSLAMQLSL).

This sequence belongs to the UPF0324 family.

The protein localises to the cell membrane. In Streptococcus pyogenes serotype M3 (strain ATCC BAA-595 / MGAS315), this protein is UPF0324 membrane protein SpyM3_0740.